Reading from the N-terminus, the 232-residue chain is Acetate--CoA ligase [ADP-forming] I subunit beta (232 aa).

One can recognise an ATP-grasp domain in the interval lysine 27–lysine 63. Serine 53–isoleucine 64 contributes to the ATP binding site.

It belongs to the acetate CoA ligase beta subunit family. As to quaternary structure, heterotetramer of two alpha and two beta subunits.

The protein resides in the cytoplasm. The enzyme catalyses acetate + ATP + CoA = acetyl-CoA + ADP + phosphate. Activity is dependent on magnesium. Functionally, catalyzes the reversible formation of acetate and ATP from acetyl-CoA by using ADP and phosphate. Can use other substrates such as isobutyryl-CoA, propionyl-CoA and butyryl-CoA, but not indoleacetyl-CoA, phenylacetyl-CoA or succinyl-CoA. Seems to be involved primarily in the conversion of acetyl-CoA to acetate. Participates in the degradation of branched-chain amino acids via branched-chain-acyl-CoA esters. The chain is Acetate--CoA ligase [ADP-forming] I subunit beta from Pyrococcus furiosus (strain ATCC 43587 / DSM 3638 / JCM 8422 / Vc1).